Consider the following 562-residue polypeptide: MKALLRALIGQGIEALRANGTLPGDTLPPDFVVERPKTREHGDFATNAAMLLAKAARSNPRALAQALLTALPDSNDVTKVEIAGPGFINFHLAPTAYQREVAHVIKQGHDYGRGLAGNGRSVGVEYVSANPTGPLHVGHGRAAAIGDSLARVLDANGWNVKREFYYNDAGVQIENLALSVQARAQGLTPDSAGWPENGYRGDYIADVANAYLAGDTVDMEGHLVTGTKDPADLESIRRFAVAYLRNEQNHDLAAFRVDFDIYFLESSLYKDGKVEEAVQKLIASGHTYEEGGALWLKSTDFGDDKDRVMRKSDGTYTYFVPDVAYHLTKWQRGYERAITELGADHHGSLTRVRAGLQAMELGIPQGWPEYVLHQMVTVMRDGEEVKLGKRAGGYVTLRDLIEETSADAVRWFLIARKPDSQLTFDIDLARAQSNDNPVFYVQYAHARVCSVLRQAQEKGYKYDQVHGLAELARLDDEHSLAVMLELSRYPEVVEIAGQTLEPYQIAQYLRELAHAFHTWYHNSKVLVDDAAERDAKLTLAVATQQVLANGLELLGVSAPEKM.

The 'HIGH' region motif lies at 129 to 139; sequence ANPTGPLHVGH.

This sequence belongs to the class-I aminoacyl-tRNA synthetase family. In terms of assembly, monomer.

Its subcellular location is the cytoplasm. The catalysed reaction is tRNA(Arg) + L-arginine + ATP = L-arginyl-tRNA(Arg) + AMP + diphosphate. This is Arginine--tRNA ligase from Xanthomonas oryzae pv. oryzae (strain MAFF 311018).